Consider the following 162-residue polypeptide: Deoxyuridine 5'-triphosphate nucleotidohydrolase (162 aa).

S11 carries the post-translational modification Phosphoserine. DUTP-binding positions include 83–85 (RSG), 97–103 (GVIDEDY), G108, R151, and 156–157 (FG).

It belongs to the dUTPase family. In terms of assembly, homotrimer. The cofactor is Mg(2+). Post-translationally, phosphorylated in vivo on Ser-11, a reaction that can be catalyzed in vitro by CDC2.

It is found in the nucleus. The catalysed reaction is dUTP + H2O = dUMP + diphosphate + H(+). Its pathway is pyrimidine metabolism; dUMP biosynthesis; dUMP from dCTP (dUTP route): step 2/2. Functionally, catalyzes the cleavage of 2'-deoxyuridine 5'-triphosphate (dUTP) into 2'-deoxyuridine 5'-monophosphate (dUMP) and inorganic pyrophosphate and through its action efficiently prevents uracil misincorporation into DNA and at the same time provides dUMP, the substrate for de novo thymidylate biosynthesis. Inhibits peroxisome proliferator-activated receptor (PPAR) activity by binding of its N-terminal to PPAR, preventing the latter's dimerization with retinoid X receptor. Essential for embryonic development. This Mus musculus (Mouse) protein is Deoxyuridine 5'-triphosphate nucleotidohydrolase (Dut).